The following is a 543-amino-acid chain: Excitatory amino acid transporter 1 (543 aa).

Residues 1–47 (MTKSNGEEPRMGGRMERLQQGVRKRTLLAKKKVQSLTKEDVKSYLFR) are Cytoplasmic-facing. Residues 48 to 68 (NAFVLLTVTAVIVGTILGFAL) traverse the membrane as a helical segment. The Extracellular portion of the chain corresponds to 69–86 (RPYKMSYREVKYFSFPGE). A helical transmembrane segment spans residues 87–108 (LLMRMLQMLVLPLIISSLVTGM). Over 109-122 (AALDSKASGKMGMR) the chain is Cytoplasmic. The helical transmembrane segment at 123 to 145 (AVVYYMTTTIIAVVIGIIIVIII) threads the bilayer. Residues 146–236 (HPGKGTKENM…IREEMVPVPG (91 aa)) lie on the Extracellular side of the membrane. N-linked (GlcNAc...) asparagine glycosylation is found at N206 and N216. The helical transmembrane segment at 237–260 (SVNGVNALGLVVFSMCFGFVIGNM) threads the bilayer. Residues 261 to 269 (KEQGQALRE) lie on the Cytoplasmic side of the membrane. Residues 270–297 (FFDSLNEAIMRLVAVIMWYAPLGILFLI) form a helical membrane-spanning segment. The Extracellular segment spans residues 298 to 318 (AGKIVEMEDMGVIGGQLAMYT). A helical transmembrane segment spans residues 319-340 (VTVIVGLLIHAVIVLPLLYFLV). Residues 341–345 (TRKNP) lie on the Cytoplasmic side of the membrane. The segment at residues 346 to 376 (WVFIGGLLQALITALGTSSSSATLPITFKCL) is an intramembrane region (discontinuously helical). Residue 363–365 (SSS) participates in L-aspartate binding. The Cytoplasmic portion of the chain corresponds to 377–385 (EENNGVDKR). A helical membrane pass occupies residues 386-412 (ITRFVLPVGATINMDGTALYEALAAIF). Positions 394, 396, and 398 each coordinate Na(+). Residue T402 coordinates L-aspartate. The Extracellular portion of the chain corresponds to 413 to 425 (IAQVNNFDLNFGQ). The segment at residues 426–459 (IITISITATAASIGAAGIPQAGLVTMVIVLTSVG) is an intramembrane region (discontinuously helical). L-aspartate is bound at residue 443–447 (IPQAG). The Extracellular segment spans residues 460-472 (LPTDDITLIIAVD). A helical transmembrane segment spans residues 473 to 494 (WFLDRLRTTTNVLGDSLGAGIV). L-aspartate contacts are provided by D476 and N483. N483 and D487 together coordinate Na(+). Residues 495-543 (EHLSRHELKNRDVEMGNSVIEENEMKKPYQLIAQDNEPEKPVADSETKM) lie on the Cytoplasmic side of the membrane. S512 is subject to Phosphoserine. Residues 522–543 (PYQLIAQDNEPEKPVADSETKM) are disordered. Positions 531–543 (EPEKPVADSETKM) are enriched in basic and acidic residues.

The protein belongs to the dicarboxylate/amino acid:cation symporter (DAACS) (TC 2.A.23) family. SLC1A3 subfamily. Homotrimer. Post-translationally, glycosylated. As to expression, detected in brain, in Bergmann glia arborising into the molecular layer of the cerebellum (at protein level). Localized in brain and is highly enriched in the Purkinje cell layer in cerebellum. Intermediate level in lung, low level in spleen, skeletal muscle and testis.

The protein localises to the cell membrane. It catalyses the reaction K(+)(in) + L-glutamate(out) + 3 Na(+)(out) + H(+)(out) = K(+)(out) + L-glutamate(in) + 3 Na(+)(in) + H(+)(in). The catalysed reaction is K(+)(in) + L-aspartate(out) + 3 Na(+)(out) + H(+)(out) = K(+)(out) + L-aspartate(in) + 3 Na(+)(in) + H(+)(in). The enzyme catalyses D-aspartate(out) + K(+)(in) + 3 Na(+)(out) + H(+)(out) = D-aspartate(in) + K(+)(out) + 3 Na(+)(in) + H(+)(in). Sodium-dependent, high-affinity amino acid transporter that mediates the uptake of L-glutamate and also L-aspartate and D-aspartate. Functions as a symporter that transports one amino acid molecule together with two or three Na(+) ions and one proton, in parallel with the counter-transport of one K(+) ion. Plays a redundant role in the rapid removal of released glutamate from the synaptic cleft, which is essential for terminating the postsynaptic action of glutamate. The protein is Excitatory amino acid transporter 1 (Slc1a3) of Mus musculus (Mouse).